A 287-amino-acid chain; its full sequence is Energy-coupling factor transporter ATP-binding protein EcfA1 (287 aa).

The ABC transporter domain occupies Ile-6–Asp-248. An ATP-binding site is contributed by Gly-47–Ser-54.

Belongs to the ABC transporter superfamily. Energy-coupling factor EcfA family. Forms a stable energy-coupling factor (ECF) transporter complex composed of 2 membrane-embedded substrate-binding proteins (S component), 2 ATP-binding proteins (A component) and 2 transmembrane proteins (T component).

The protein localises to the cell membrane. ATP-binding (A) component of a common energy-coupling factor (ECF) ABC-transporter complex. Unlike classic ABC transporters this ECF transporter provides the energy necessary to transport a number of different substrates. This chain is Energy-coupling factor transporter ATP-binding protein EcfA1, found in Symbiobacterium thermophilum (strain DSM 24528 / JCM 14929 / IAM 14863 / T).